Consider the following 141-residue polypeptide: Large ribosomal subunit protein bL17 (141 aa).

Belongs to the bacterial ribosomal protein bL17 family. As to quaternary structure, part of the 50S ribosomal subunit. Contacts protein L32.

The protein is Large ribosomal subunit protein bL17 of Maridesulfovibrio salexigens (strain ATCC 14822 / DSM 2638 / NCIMB 8403 / VKM B-1763) (Desulfovibrio salexigens).